A 300-amino-acid polypeptide reads, in one-letter code: uncharacterized protein (300 aa).

Solcar repeat units lie at residues 10 to 101, 119 to 199, and 212 to 294; these read ESQT…VKDF, GKAI…AKEY, and FQNF…LIPF. Transmembrane regions (helical) follow at residues 16-36, 70-86, 121-141, 178-198, 215-235, and 275-295; these read IVGS…VDTI, ATSL…YKIV, AIMH…LLPL, TAAR…FAKE, FFTS…LDVI, and LTTG…IPFF.

This sequence belongs to the mitochondrial carrier (TC 2.A.29) family.

Its subcellular location is the mitochondrion inner membrane. This is an uncharacterized protein from Schizosaccharomyces pombe (strain 972 / ATCC 24843) (Fission yeast).